Consider the following 368-residue polypeptide: Alcohol dehydrogenase 6 (368 aa).

Phosphoserine is present on Ser23. Residues Cys47, His69, Cys99, Cys102, Cys105, Cys113, and Cys175 each coordinate Zn(2+). Residues 200–205, Asp224, Lys229, and 293–295 contribute to the NAD(+) site; these read GLGGVG and VGV.

It belongs to the zinc-containing alcohol dehydrogenase family. Class-V subfamily. Dimer. Requires Zn(2+) as cofactor. Stomach and liver.

The protein resides in the cytoplasm. It catalyses the reaction a primary alcohol + NAD(+) = an aldehyde + NADH + H(+). The enzyme catalyses a secondary alcohol + NAD(+) = a ketone + NADH + H(+). Its activity is regulated as follows. Inhibited partially by pyrazole (10 mM) in the reaction mixture containing 100 mM ethanol at pH 10.0. Alcohol dehydrogenase. Catalyzes the NAD-dependent oxidation of primary alcohols to the corresponding aldehydes. Oxidizes secondary alcohols to the corresponding ketones. The protein is Alcohol dehydrogenase 6 (ADH6) of Homo sapiens (Human).